The primary structure comprises 263 residues: Small ribosomal subunit protein uS2m (263 aa).

The N-terminal 15 residues, methionine 1 to arginine 15, are a transit peptide targeting the mitochondrion.

The protein belongs to the universal ribosomal protein uS2 family. As to quaternary structure, component of the mitochondrial small ribosomal subunit (mt-SSU). Mature yeast 74S mitochondrial ribosomes consist of a small (37S) and a large (54S) subunit. The 37S small subunit contains a 15S ribosomal RNA (15S mt-rRNA) and at least 32 different proteins. The 54S large subunit contains a 21S rRNA (21S mt-rRNA) and at least 45 different proteins.

Its subcellular location is the mitochondrion. Component of the mitochondrial ribosome (mitoribosome), a dedicated translation machinery responsible for the synthesis of mitochondrial genome-encoded proteins, including at least some of the essential transmembrane subunits of the mitochondrial respiratory chain. The mitoribosomes are attached to the mitochondrial inner membrane and translation products are cotranslationally integrated into the membrane. The sequence is that of Small ribosomal subunit protein uS2m from Schizosaccharomyces pombe (strain 972 / ATCC 24843) (Fission yeast).